The sequence spans 118 residues: Basic phospholipase A2 PA-12A (118 aa).

Intrachain disulfides connect Cys11/Cys71, Cys27/Cys117, Cys29/Cys45, Cys44/Cys98, Cys51/Cys91, Cys60/Cys84, and Cys78/Cys89. 3 residues coordinate Ca(2+): Tyr28, Gly30, and Gly32. His48 is a catalytic residue. Asp49 serves as a coordination point for Ca(2+). Residue Asp92 is part of the active site.

Belongs to the phospholipase A2 family. Group I subfamily. D49 sub-subfamily. Requires Ca(2+) as cofactor. Expressed by the venom gland.

It is found in the secreted. It carries out the reaction a 1,2-diacyl-sn-glycero-3-phosphocholine + H2O = a 1-acyl-sn-glycero-3-phosphocholine + a fatty acid + H(+). Functionally, PLA2 catalyzes the calcium-dependent hydrolysis of the 2-acyl groups in 3-sn-phosphoglycerides. The chain is Basic phospholipase A2 PA-12A from Pseudechis australis (Mulga snake).